A 286-amino-acid chain; its full sequence is MTIRFDNVSYTYQKGTPYQHQAIHDVNTEFEQGKYYAIVGQTGSGKSTLIQNINALLKPTTGTVTVDDITITHKTKDKYIRPVRKRIGMVFQFPESQLFEDTVEREMIFGPKNFKMNLDEAKNYAHRLLMDLGFSRDVMSQSPFQMSGGQMRKIAIVSILAMNPDIIVVDEPTAGLDPQSKRQVMRLLKSLQTDENKAIILISHDMNEVARYADEVIVMKEGSIVSQTSPKELFKDKKKLADWHIGLPEIVQLQYDFEQKYQTKLKDIALTEEAFVSLYKEWQHEK.

Residues 3 to 246 (IRFDNVSYTY…KKKLADWHIG (244 aa)) form the ABC transporter domain. Residue 40–47 (GQTGSGKS) coordinates ATP.

This sequence belongs to the ABC transporter superfamily. Energy-coupling factor EcfA family. Forms a stable energy-coupling factor (ECF) transporter complex composed of 2 membrane-embedded substrate-binding proteins (S component), 2 ATP-binding proteins (A component) and 2 transmembrane proteins (T component).

The protein localises to the cell membrane. Functionally, ATP-binding (A) component of a common energy-coupling factor (ECF) ABC-transporter complex. Unlike classic ABC transporters this ECF transporter provides the energy necessary to transport a number of different substrates. This is Energy-coupling factor transporter ATP-binding protein EcfA2 from Staphylococcus aureus (strain USA300).